Here is a 308-residue protein sequence, read N- to C-terminus: Ornithine carbamoyltransferase (308 aa).

Carbamoyl phosphate contacts are provided by residues 50–53 (STRT), glutamine 77, arginine 101, and 128–131 (HPCQ). Residues asparagine 160, aspartate 224, and 228-229 (SM) each bind L-ornithine. Residues 264 to 265 (CL) and arginine 292 each bind carbamoyl phosphate.

This sequence belongs to the aspartate/ornithine carbamoyltransferase superfamily. OTCase family.

The protein resides in the cytoplasm. The enzyme catalyses carbamoyl phosphate + L-ornithine = L-citrulline + phosphate + H(+). Its pathway is amino-acid biosynthesis; L-arginine biosynthesis; L-arginine from L-ornithine and carbamoyl phosphate: step 1/3. Functionally, reversibly catalyzes the transfer of the carbamoyl group from carbamoyl phosphate (CP) to the N(epsilon) atom of ornithine (ORN) to produce L-citrulline. The sequence is that of Ornithine carbamoyltransferase from Mycobacterium ulcerans (strain Agy99).